We begin with the raw amino-acid sequence, 213 residues long: Imidazole glycerol phosphate synthase subunit HisH (213 aa).

In terms of domain architecture, Glutamine amidotransferase type-1 spans 3–213; the sequence is MIGVIDYGMG…VGIVTGRENG (211 aa). Cysteine 81 serves as the catalytic Nucleophile. Active-site residues include histidine 188 and glutamate 190.

In terms of assembly, heterodimer of HisH and HisF.

Its subcellular location is the cytoplasm. The catalysed reaction is 5-[(5-phospho-1-deoxy-D-ribulos-1-ylimino)methylamino]-1-(5-phospho-beta-D-ribosyl)imidazole-4-carboxamide + L-glutamine = D-erythro-1-(imidazol-4-yl)glycerol 3-phosphate + 5-amino-1-(5-phospho-beta-D-ribosyl)imidazole-4-carboxamide + L-glutamate + H(+). It carries out the reaction L-glutamine + H2O = L-glutamate + NH4(+). The protein operates within amino-acid biosynthesis; L-histidine biosynthesis; L-histidine from 5-phospho-alpha-D-ribose 1-diphosphate: step 5/9. IGPS catalyzes the conversion of PRFAR and glutamine to IGP, AICAR and glutamate. The HisH subunit catalyzes the hydrolysis of glutamine to glutamate and ammonia as part of the synthesis of IGP and AICAR. The resulting ammonia molecule is channeled to the active site of HisF. The protein is Imidazole glycerol phosphate synthase subunit HisH of Geobacillus thermodenitrificans (strain NG80-2).